A 439-amino-acid chain; its full sequence is UDP-N-acetylmuramoylalanine--D-glutamate ligase (439 aa).

116–122 (GSNGKTT) contacts ATP.

The protein belongs to the MurCDEF family.

It is found in the cytoplasm. It carries out the reaction UDP-N-acetyl-alpha-D-muramoyl-L-alanine + D-glutamate + ATP = UDP-N-acetyl-alpha-D-muramoyl-L-alanyl-D-glutamate + ADP + phosphate + H(+). It functions in the pathway cell wall biogenesis; peptidoglycan biosynthesis. Cell wall formation. Catalyzes the addition of glutamate to the nucleotide precursor UDP-N-acetylmuramoyl-L-alanine (UMA). The protein is UDP-N-acetylmuramoylalanine--D-glutamate ligase of Shewanella oneidensis (strain ATCC 700550 / JCM 31522 / CIP 106686 / LMG 19005 / NCIMB 14063 / MR-1).